Here is a 431-residue protein sequence, read N- to C-terminus: 3-phosphoshikimate 1-carboxyvinyltransferase (431 aa).

Residues Lys-20, Ser-21, and Arg-25 each contribute to the 3-phosphoshikimate site. Lys-20 serves as a coordination point for phosphoenolpyruvate. 2 residues coordinate phosphoenolpyruvate: Gly-91 and Arg-119. The 3-phosphoshikimate site is built by Ser-164, Gln-166, Asp-317, and Lys-344. Gln-166 provides a ligand contact to phosphoenolpyruvate. Catalysis depends on Asp-317, which acts as the Proton acceptor. The phosphoenolpyruvate site is built by Arg-348 and Arg-390.

The protein belongs to the EPSP synthase family. In terms of assembly, monomer.

Its subcellular location is the cytoplasm. The enzyme catalyses 3-phosphoshikimate + phosphoenolpyruvate = 5-O-(1-carboxyvinyl)-3-phosphoshikimate + phosphate. It participates in metabolic intermediate biosynthesis; chorismate biosynthesis; chorismate from D-erythrose 4-phosphate and phosphoenolpyruvate: step 6/7. Catalyzes the transfer of the enolpyruvyl moiety of phosphoenolpyruvate (PEP) to the 5-hydroxyl of shikimate-3-phosphate (S3P) to produce enolpyruvyl shikimate-3-phosphate and inorganic phosphate. The polypeptide is 3-phosphoshikimate 1-carboxyvinyltransferase (Aquifex aeolicus (strain VF5)).